A 160-amino-acid chain; its full sequence is Dihydrofolate reductase (160 aa).

One can recognise a DHFR domain in the interval 1–160; the sequence is MLIAIWAMTQ…NVNYYRKKQQ (160 aa). 5-7 is a substrate binding site; it reads IWA. NADP(+) contacts are provided by residues 6 to 7 and 14 to 19; these read WA and IGNNNT. Substrate is bound at residue Glu27. 43-46 contacts NADP(+); sequence GRKT. Arg57 provides a ligand contact to substrate. Residues 62–65 and 101–106 each bind NADP(+); these read LSKD and CGGKSV. Residue Ser120 coordinates substrate.

This sequence belongs to the dihydrofolate reductase family.

It catalyses the reaction (6S)-5,6,7,8-tetrahydrofolate + NADP(+) = 7,8-dihydrofolate + NADPH + H(+). It participates in cofactor biosynthesis; tetrahydrofolate biosynthesis; 5,6,7,8-tetrahydrofolate from 7,8-dihydrofolate: step 1/1. In terms of biological role, key enzyme in folate metabolism. Catalyzes an essential reaction for de novo glycine and purine synthesis, and for DNA precursor synthesis. The protein is Dihydrofolate reductase (folA) of Mycoplasma genitalium (strain ATCC 33530 / DSM 19775 / NCTC 10195 / G37) (Mycoplasmoides genitalium).